A 336-amino-acid polypeptide reads, in one-letter code: NADH-quinone oxidoreductase subunit H (336 aa).

8 helical membrane passes run 14 to 34 (IIVAQILALMVPILVSVAFLV), 82 to 102 (IIFLAAPMLTMMLALAAWAVI), 115 to 135 (VGILYLLAISSQGVYGIIMAG), 161 to 181 (IGLVIITVLLCVGSLNLSDVV), 186 to 206 (TVWFAIPLLPMFVIFFISALA), 247 to 267 (ILMSAMTSVLFLGGWLPPLDV), 273 to 293 (VPGPIWFILKICFCLFLFVWV), and 312 to 332 (VFLPFSLVWVILTAGVLVTFD).

It belongs to the complex I subunit 1 family. NDH-1 is composed of 14 different subunits. Subunits NuoA, H, J, K, L, M, N constitute the membrane sector of the complex.

The protein resides in the cell inner membrane. It catalyses the reaction a quinone + NADH + 5 H(+)(in) = a quinol + NAD(+) + 4 H(+)(out). In terms of biological role, NDH-1 shuttles electrons from NADH, via FMN and iron-sulfur (Fe-S) centers, to quinones in the respiratory chain. The immediate electron acceptor for the enzyme in this species is believed to be ubiquinone. Couples the redox reaction to proton translocation (for every two electrons transferred, four hydrogen ions are translocated across the cytoplasmic membrane), and thus conserves the redox energy in a proton gradient. This subunit may bind ubiquinone. This Rhodospirillum centenum (strain ATCC 51521 / SW) protein is NADH-quinone oxidoreductase subunit H.